Reading from the N-terminus, the 93-residue chain is Small ribosomal subunit protein uS19 (93 aa).

The protein belongs to the universal ribosomal protein uS19 family.

Its function is as follows. Protein S19 forms a complex with S13 that binds strongly to the 16S ribosomal RNA. The chain is Small ribosomal subunit protein uS19 from Clostridium acetobutylicum (strain ATCC 824 / DSM 792 / JCM 1419 / IAM 19013 / LMG 5710 / NBRC 13948 / NRRL B-527 / VKM B-1787 / 2291 / W).